The primary structure comprises 232 residues: MPFDPRLQPLTAAEARVLGTLMEKARTVPDSYPLTLNAVVTGCNQKSSRDPVTTLSDAEVQEALDSLRRRAMVVEIGGQRATRWEHNFTRAAGVPDQSAALLGLLMLRGPQTAGELRINAERWHRFADISSVEAFLDELQSRSEEKGGPLVALLPRAPGARESRWTHLLCGPLSAADMAAQAAQAAAPTSSARAADPALAERVAALEAEVAALRGSLAALCGQLGVSLPGQP.

Belongs to the UPF0502 family.

This Paracidovorax citrulli (strain AAC00-1) (Acidovorax citrulli) protein is UPF0502 protein Aave_3438.